Reading from the N-terminus, the 185-residue chain is Elongation factor P (185 aa).

The protein belongs to the elongation factor P family.

The protein resides in the cytoplasm. It participates in protein biosynthesis; polypeptide chain elongation. Its function is as follows. Involved in peptide bond synthesis. Stimulates efficient translation and peptide-bond synthesis on native or reconstituted 70S ribosomes in vitro. Probably functions indirectly by altering the affinity of the ribosome for aminoacyl-tRNA, thus increasing their reactivity as acceptors for peptidyl transferase. The protein is Elongation factor P of Fervidobacterium nodosum (strain ATCC 35602 / DSM 5306 / Rt17-B1).